The following is a 115-amino-acid chain: Procyclic form-specific polypeptide (115 aa).

The signal sequence occupies residues 1–27 (MAPRSLYLLAVLLFSANLFAGVGFAAA). Residues 27-97 (AAEGPEDKGL…PEPEPGAATL (71 aa)) form a disordered region. Residues 31-52 (PEDKGLTKGGKGKGEKGTKVGA) show a composition bias toward basic and acidic residues. A glycan (N-linked (GlcNAc...) asparagine) is linked at N56. 17 tandem repeats follow at residues 59 to 60 (DP), 61 to 62 (DP), 63 to 64 (EP), 65 to 66 (EP), 67 to 68 (EP), 69 to 70 (EP), 71 to 72 (EP), 73 to 74 (EP), 75 to 76 (EP), 77 to 78 (EP), 79 to 80 (EP), 81 to 82 (EP), 83 to 84 (EP), 85 to 86 (EP), 87 to 88 (EP), 89 to 90 (EP), and 91 to 92 (EP). Residues 59 to 92 (DPDPEPEPEPEPEPEPEPEPEPEPEPEPEPEPEP) are 17 X 2 AA tandem repeats of [DE]-P. Acidic residues predominate over residues 60–90 (PDPEPEPEPEPEPEPEPEPEPEPEPEPEPEP). The GPI-anchor amidated glycine moiety is linked to residue G93. Positions 94-115 (AATLKSVALPFAIAAAALVAAF) are cleaved as a propeptide — removed in mature form.

Its subcellular location is the cell membrane. Functionally, major surface antigen of procyclic forms. This chain is Procyclic form-specific polypeptide (PROA), found in Trypanosoma brucei brucei.